The primary structure comprises 268 residues: Phosphate import ATP-binding protein PstB 2 (268 aa).

One can recognise an ABC transporter domain in the interval 19–263 (YKVRNMAFFY…PKDKRTEDYI (245 aa)). Residue 51–58 (GPSGCGKS) participates in ATP binding.

Belongs to the ABC transporter superfamily. Phosphate importer (TC 3.A.1.7) family. As to quaternary structure, the complex is composed of two ATP-binding proteins (PstB), two transmembrane proteins (PstC and PstA) and a solute-binding protein (PstS).

The protein localises to the cell inner membrane. The catalysed reaction is phosphate(out) + ATP + H2O = ADP + 2 phosphate(in) + H(+). Functionally, part of the ABC transporter complex PstSACB involved in phosphate import. Responsible for energy coupling to the transport system. The sequence is that of Phosphate import ATP-binding protein PstB 2 from Gloeobacter violaceus (strain ATCC 29082 / PCC 7421).